Reading from the N-terminus, the 585-residue chain is Chaperonin CPN60-like 1, mitochondrial (585 aa).

The N-terminal 32 residues, 1 to 32, are a transit peptide targeting the mitochondrion; the sequence is MYRLVSNVASKARIARKCTSQIGSRLNSTRNY.

It belongs to the chaperonin (HSP60) family.

It is found in the mitochondrion. Implicated in mitochondrial protein import and macromolecular assembly. May facilitate the correct folding of imported proteins. May also prevent misfolding and promote the refolding and proper assembly of unfolded polypeptides generated under stress conditions in the mitochondrial matrix. The protein is Chaperonin CPN60-like 1, mitochondrial of Arabidopsis thaliana (Mouse-ear cress).